The primary structure comprises 306 residues: Glutaminase (306 aa).

Substrate-binding residues include Ser64, Asn115, Glu159, Asn166, Tyr190, Tyr242, and Val260.

Belongs to the glutaminase family. Homotetramer.

It catalyses the reaction L-glutamine + H2O = L-glutamate + NH4(+). This chain is Glutaminase, found in Vibrio cholerae serotype O1 (strain ATCC 39541 / Classical Ogawa 395 / O395).